Reading from the N-terminus, the 140-residue chain is Pro-variola growth factor (140 aa).

The signal sequence occupies residues 1–18 (MSMKYLMLLFAAMIIRSF). Over 19 to 100 (ANSGNAIETT…SEKPNTTTSY (82 aa)) the chain is Extracellular. A glycan (N-linked (GlcNAc...) asparagine; by host) is linked at Asn34. The EGF-like domain maps to 41–81 (AIRLCGPEGNGYCFHGICIHARDIDGMYCRCSHGYTGIRCQ). 3 cysteine pairs are disulfide-bonded: Cys45–Cys58, Cys53–Cys69, and Cys71–Cys80. Residue Asn95 is glycosylated (N-linked (GlcNAc...) asparagine; by host). A helical transmembrane segment spans residues 101-121 (IPSPGIVLVLLVSIIMCCLLF). Residues 122–140 (VYRFTRRTNKLPLQDMVVP) are Cytoplasmic-facing.

This sequence belongs to the orthopoxvirus OPG019 family. Variola growth factor interacts with host EGFR and promotes EGFR dimerization.

The protein resides in the host membrane. It localises to the secreted. Functionally, stimulates cellular proliferation (hyperplasia)and mobility around infected cells to promote rapid and efficient spread of infection. This effect is beneficial for virus replication in vivo, because poxviruses replicate possibly better in proliferating cells than in quiescent cells. Acts by binding host EGFR, inducing its dimerization, autophosphorylation and leading to activation of several cellular pathways regulating cell proliferation or cell survival. The activation by host EGFR of mitogen activated protein kinases (MAPK) and extracellular-signal regulated kinases (ERK) are essential for the positive effect of vaccinia growth factor on poxvirus virulence in vivo. This is Pro-variola growth factor (OPG019) from Variola virus.